We begin with the raw amino-acid sequence, 458 residues long: NADH-quinone oxidoreductase subunit N (458 aa).

14 helical membrane passes run 2–22, 30–50, 62–82, 93–113, 118–138, 153–173, 196–216, 235–255, 261–281, 290–310, 319–339, 361–381, 397–417, and 438–458; these read LLIL…CFAL, IIYN…FKYS, GINI…SLII, AIKF…FVAI, FLLL…LAGF, FILG…IYGF, LIIG…SSPL, FTSA…KLII, INYN…AFGA, LMAY…ILPN, LYIL…IMLF, IAAL…LTGF, FTLA…YLKV, and LLLI…IILF.

It belongs to the complex I subunit 2 family. As to quaternary structure, NDH-1 is composed of 14 different subunits. Subunits NuoA, H, J, K, L, M, N constitute the membrane sector of the complex.

The protein resides in the cell inner membrane. It carries out the reaction a quinone + NADH + 5 H(+)(in) = a quinol + NAD(+) + 4 H(+)(out). Its function is as follows. NDH-1 shuttles electrons from NADH, via FMN and iron-sulfur (Fe-S) centers, to quinones in the respiratory chain. The immediate electron acceptor for the enzyme in this species is believed to be ubiquinone. Couples the redox reaction to proton translocation (for every two electrons transferred, four hydrogen ions are translocated across the cytoplasmic membrane), and thus conserves the redox energy in a proton gradient. The protein is NADH-quinone oxidoreductase subunit N of Rickettsia typhi (strain ATCC VR-144 / Wilmington).